The chain runs to 122 residues: Ribosome-binding factor A (122 aa).

It belongs to the RbfA family. In terms of assembly, monomer. Binds 30S ribosomal subunits, but not 50S ribosomal subunits or 70S ribosomes.

It localises to the cytoplasm. Functionally, one of several proteins that assist in the late maturation steps of the functional core of the 30S ribosomal subunit. Associates with free 30S ribosomal subunits (but not with 30S subunits that are part of 70S ribosomes or polysomes). Required for efficient processing of 16S rRNA. May interact with the 5'-terminal helix region of 16S rRNA. In Opitutus terrae (strain DSM 11246 / JCM 15787 / PB90-1), this protein is Ribosome-binding factor A.